Consider the following 163-residue polypeptide: Bacterial ISG15-like ubiquitin-like protein BilA (163 aa).

2 Ubiquitin-like BIL-type domains span residues 4-80 (LVVF…RCKR) and 81-163 (IRAT…RIEG). G163 is covalently cross-linked (Glycyl lysine isopeptide (Gly-Lys) (interchain with K-? in central tail fiber acceptor protein)).

Component of the Bil (bacterial ISG15-like) antiviral defense system, composed of BilA, BilB, BilC and BilD. The Bil system specifically conjugates a ubiquitin-like moiety (bilA) to the bacteriophage central tail fiber (CTF, or tip attachment protein J) via reactions involving E1 (bilD) and E2 (bilB). Modifies CTF of phage SECphi27 and SECphi4, which probably interferes with assembly of the phage tail. Also modifies T5 baseplate hub protein pb3 (gene D16), but not gp27 of phage T6 (Bil defends against T6). Bil-encoding bacteria produce mostly defective phage SECphi27, many of which have phage assembly defects, including no tails. SECphi27 phage progeny produced in E.coli with the Bil system inject less DNA into naive host cells, maybe because the phage are less able to adsorb and inject their DNA into host cells. Its function is as follows. Expression of the Bil system in E.coli (strain MG1655) confers about 100-fold resistance to phage SECphi27, SECphi18, SECphi6, SECphi4 and T5, but not to SECphi17. When cells expressing the Bil system are infected by phage SECphi27 at low multiplicity of infection (0.03 MOI) the culture survives, at 3.0 MOI the culture collapses at the same time as cells without the Bil system. This Collimonas sp. (strain OK412) protein is Bacterial ISG15-like ubiquitin-like protein BilA.